We begin with the raw amino-acid sequence, 491 residues long: Glutamyl-tRNA(Gln) amidotransferase subunit A (491 aa).

Active-site charge relay system residues include K76 and S154. S178 serves as the catalytic Acyl-ester intermediate.

The protein belongs to the amidase family. GatA subfamily. As to quaternary structure, heterotrimer of A, B and C subunits.

The enzyme catalyses L-glutamyl-tRNA(Gln) + L-glutamine + ATP + H2O = L-glutaminyl-tRNA(Gln) + L-glutamate + ADP + phosphate + H(+). In terms of biological role, allows the formation of correctly charged Gln-tRNA(Gln) through the transamidation of misacylated Glu-tRNA(Gln) in organisms which lack glutaminyl-tRNA synthetase. The reaction takes place in the presence of glutamine and ATP through an activated gamma-phospho-Glu-tRNA(Gln). This is Glutamyl-tRNA(Gln) amidotransferase subunit A from Cereibacter sphaeroides (strain ATCC 17025 / ATH 2.4.3) (Rhodobacter sphaeroides).